The sequence spans 102 residues: Thioredoxin (102 aa).

The region spanning 2–102 is the Thioredoxin domain; the sequence is VTEIKSLKQL…KAKIVQLVSQ (101 aa). Cys30 and Cys33 form a disulfide bridge.

This sequence belongs to the thioredoxin family.

Participates in various redox reactions through the reversible oxidation of its active center dithiol to a disulfide and catalyzes dithiol-disulfide exchange reactions. The chain is Thioredoxin (trxA) from Mycoplasma pneumoniae (strain ATCC 29342 / M129 / Subtype 1) (Mycoplasmoides pneumoniae).